We begin with the raw amino-acid sequence, 402 residues long: Zinc finger protein 809 (402 aa).

The region spanning 4–75 is the KRAB domain; sequence VSFEDVAVDF…AEASSRSLPG (72 aa). The interval 118 to 139 is disordered; it reads QEVSKGTTSRHRRAPVKSLCRK. Over residues 125–139 the composition is skewed to basic residues; sequence TSRHRRAPVKSLCRK. 7 C2H2-type zinc fingers span residues 155-178, 184-206, 213-235, 241-263, 269-291, 297-319, and 325-347; these read YECK…RRTH, YECD…QKTH, YECS…ERTH, YECT…KKTH, FKCE…QKKH, YECT…RIAH, and YECK…QKRH.

This sequence belongs to the krueppel C2H2-type zinc-finger protein family.

The protein localises to the nucleus. Its function is as follows. Transcription factor specifically required to repress retrotransposons in embryonic stem cells. Recognizes and binds retroviral DNA sequences from a large subset of mammalian retroviruses and retroelements and repress their expression by recruiting a repressive complex containing TRIM28/KAP1. The protein is Zinc finger protein 809 of Mus musculus (Mouse).